The following is a 95-amino-acid chain: Aspartyl/glutamyl-tRNA(Asn/Gln) amidotransferase subunit C (95 aa).

Belongs to the GatC family. In terms of assembly, heterotrimer of A, B and C subunits.

It catalyses the reaction L-glutamyl-tRNA(Gln) + L-glutamine + ATP + H2O = L-glutaminyl-tRNA(Gln) + L-glutamate + ADP + phosphate + H(+). It carries out the reaction L-aspartyl-tRNA(Asn) + L-glutamine + ATP + H2O = L-asparaginyl-tRNA(Asn) + L-glutamate + ADP + phosphate + 2 H(+). Functionally, allows the formation of correctly charged Asn-tRNA(Asn) or Gln-tRNA(Gln) through the transamidation of misacylated Asp-tRNA(Asn) or Glu-tRNA(Gln) in organisms which lack either or both of asparaginyl-tRNA or glutaminyl-tRNA synthetases. The reaction takes place in the presence of glutamine and ATP through an activated phospho-Asp-tRNA(Asn) or phospho-Glu-tRNA(Gln). The protein is Aspartyl/glutamyl-tRNA(Asn/Gln) amidotransferase subunit C of Prochlorococcus marinus (strain NATL2A).